The primary structure comprises 423 residues: MERLISHPPLMIVSDLDHTMVDHQDHENLSLLRFNSLWEYAYRRDSLLVFSTARSPVLYKELRKEKPLLTPDIIITSIGTEIAFGNSMVPDHAWVESLNSCKWNREIVLEETSKFPELTLQPKTEQRLHKVSFYIDEGKGEALTKELSQLLEKRGLDVKIIYSWGKNVDVIPRGAGKGEALEYLLKKLQAEGIFPVNTLACGDSEHDAELFSIPDVHGVMVSNSQEELLKWRSENALNNLKVIHSTERCADGIIQAIGHFNLGPDLSPRDVSEFLDRKMDNVNPGHEVVRFYLFYERLRRGEIKNYETYIASFKDSCLHAAVLFHPSGAEKSLRDTIDELKKCYGDKRGKKFWVWVDQVLVTDTIPGKWIVKFDKWEQCEDESQCCKTTVEFTSKGGDLVWEKVKQIWSEESKVKDDNSSWIL.

It belongs to the sucrose phosphatase family. As to quaternary structure, homodimer. Mg(2+) is required as a cofactor.

It catalyses the reaction sucrose 6(F)-phosphate + H2O = sucrose + phosphate. The protein operates within glycan biosynthesis; sucrose biosynthesis; sucrose from D-fructose 6-phosphate and UDP-alpha-D-glucose: step 2/2. Functionally, catalyzes the final step of sucrose synthesis. The sequence is that of Probable sucrose-phosphatase 3b (SPP3B) from Arabidopsis thaliana (Mouse-ear cress).